Consider the following 470-residue polypeptide: D-serine/D-alanine/glycine transporter (470 aa).

A run of 12 helical transmembrane segments spans residues 30-50 (LIAI…KTIS), 51-71 (LAGP…FFVM), 102-122 (FTGW…VVAI), 128-148 (FWFP…LLLV), 162-182 (FWFA…GLVM), 211-231 (LSGF…IELV), 256-276 (IIMF…WSSV), 283-303 (FVEL…NFVV), 350-370 (FSCI…SVIG), 371-391 (AFTM…TIIL), 413-433 (PLGK…LVLL), and 441-461 (QALL…LFIG).

Belongs to the amino acid-polyamine-organocation (APC) superfamily. Amino acid transporter (AAT) (TC 2.A.3.1) family.

Its subcellular location is the cell inner membrane. It catalyses the reaction D-alanine(in) + H(+)(in) = D-alanine(out) + H(+)(out). The enzyme catalyses D-serine(out) + H(+)(out) = D-serine(in) + H(+)(in). It carries out the reaction glycine(in) + H(+)(in) = glycine(out) + H(+)(out). The catalysed reaction is D-cycloserine(in) + H(+)(in) = D-cycloserine(out) + H(+)(out). With respect to regulation, uptake of D-serine is inhibited by D-alanine, D-cycloserine, glycine and at high concentrations of D-threonine. Permease that is involved in the transport across the cytoplasmic membrane of D-alanine, D-serine and glycine. Is the only transporter of D-alanine. Transports D-serine less efficiently than DsdX. In addition, in minimal media, transports the broad spectrum antibiotic D-cycloserine into the cell. Transports D-cycloserine only in minimal media, and not in a complex medium, suggesting that CycA does not play a role in D-cycloserine transport when E.coli is grown in a complex or biologically relevant medium, probably due to competition from other CycA substrates present in the medium. The chain is D-serine/D-alanine/glycine transporter (cycA) from Escherichia coli O6:H1 (strain CFT073 / ATCC 700928 / UPEC).